The sequence spans 153 residues: Prostaglandin E synthase (153 aa).

At 1 to 13 (MPPPSLAMVSGQA) the chain is on the lumenal side. Residues 14-42 (LPAFLLCSTLLVIKMYAVAVITGQVRLRK) traverse the membrane as a helical segment. Arginine 39 is a glutathione binding site. At 43-61 (KAFANPEDALRHGGLQFHR) the chain is on the cytoplasmic side. The helical transmembrane segment at 62 to 91 (DDQDVERCLRAHRNDMETIYPFLFLGLVYS) threads the bilayer. Residue 74 to 78 (RNDME) participates in glutathione binding. The Lumenal portion of the chain corresponds to 92 to 96 (FLGPD). The chain crosses the membrane as a helical span at residues 97-120 (PFVAQMHFLVFFLGRMVHTVAYLG). The glutathione site is built by histidine 114 and tyrosine 118. Over 121-124 (KLRA) the chain is Cytoplasmic. The helical transmembrane segment at 125–153 (PTRSLAYTVAQLPCASMALQIVWEAARHL) threads the bilayer. Glutathione is bound at residue 127–131 (RSLAY).

This sequence belongs to the MAPEG family. Homotrimer. The cofactor is glutathione.

It localises to the membrane. The protein localises to the cytoplasm. Its subcellular location is the perinuclear region. It carries out the reaction prostaglandin H2 = prostaglandin E2. It catalyses the reaction 2-glyceryl-prostaglandin H2 = 2-glyceryl-prostaglandin E2. The catalysed reaction is prostaglandin G2 = (15S)-15-hydroperoxy-prostaglandin E2. The enzyme catalyses 1-chloro-2,4-dinitrobenzene + glutathione = 2,4-dinitrophenyl-S-glutathione + chloride + H(+). It carries out the reaction (5S)-hydroperoxy-(6E,8Z,11Z,14Z)-eicosatetraenoate + 2 glutathione = (5S)-hydroxy-(6E,8Z,11Z,14Z)-eicosatetraenoate + glutathione disulfide + H2O. It functions in the pathway lipid metabolism; prostaglandin biosynthesis. Its function is as follows. Terminal enzyme of the cyclooxygenase (COX)-2-mediated prostaglandin E2 (PGE2) biosynthetic pathway. Catalyzes the glutathione-dependent oxidoreduction of prostaglandin endoperoxide H2 (PGH2) to prostaglandin E2 (PGE2) in response to inflammatory stimuli. Plays a key role in inflammation response, fever and pain. Also catalyzes the oxidoreduction of endocannabinoids into prostaglandin glycerol esters and PGG2 into 15-hydroperoxy-PGE2. In addition, displays low glutathione transferase and glutathione-dependent peroxidase activities, toward 1-chloro-2,4-dinitrobenzene and 5-hydroperoxyicosatetraenoic acid (5-HPETE), respectively. This Equus caballus (Horse) protein is Prostaglandin E synthase (PTGES).